The following is a 274-amino-acid chain: UPF0173 metal-dependent hydrolase A2cp1_1196 (274 aa).

It belongs to the UPF0173 family.

This chain is UPF0173 metal-dependent hydrolase A2cp1_1196, found in Anaeromyxobacter dehalogenans (strain 2CP-1 / ATCC BAA-258).